The sequence spans 605 residues: Acetoin dehydrogenase operon transcriptional activator AcoR (605 aa).

The region spanning 295–520 (VIGQSGRSQA…LFNVFERLSI (226 aa)) is the Sigma-54 factor interaction domain. ATP contacts are provided by residues 323-330 (GETGTGKE) and 387-396 (ANQGTLFLDE). Residues 578–597 (VSQAAKISGIPRSTFYKRLK) constitute a DNA-binding region (H-T-H motif).

Its function is as follows. Acts as a transcriptional activator of the acoABCL operon encoding the acetoin dehydrogenase complex. This is Acetoin dehydrogenase operon transcriptional activator AcoR (acoR) from Bacillus subtilis (strain 168).